A 357-amino-acid polypeptide reads, in one-letter code: Histidinol-phosphate aminotransferase 1 (357 aa).

At K210 the chain carries N6-(pyridoxal phosphate)lysine.

Belongs to the class-II pyridoxal-phosphate-dependent aminotransferase family. Histidinol-phosphate aminotransferase subfamily. As to quaternary structure, homodimer. It depends on pyridoxal 5'-phosphate as a cofactor.

The enzyme catalyses L-histidinol phosphate + 2-oxoglutarate = 3-(imidazol-4-yl)-2-oxopropyl phosphate + L-glutamate. Its pathway is amino-acid biosynthesis; L-histidine biosynthesis; L-histidine from 5-phospho-alpha-D-ribose 1-diphosphate: step 7/9. The polypeptide is Histidinol-phosphate aminotransferase 1 (Methylococcus capsulatus (strain ATCC 33009 / NCIMB 11132 / Bath)).